The chain runs to 240 residues: 1-(5-phosphoribosyl)-5-[(5-phosphoribosylamino)methylideneamino] imidazole-4-carboxamide isomerase (240 aa).

Asp9 serves as the catalytic Proton acceptor. The active-site Proton donor is Asp131.

It belongs to the HisA/HisF family.

The protein localises to the cytoplasm. The catalysed reaction is 1-(5-phospho-beta-D-ribosyl)-5-[(5-phospho-beta-D-ribosylamino)methylideneamino]imidazole-4-carboxamide = 5-[(5-phospho-1-deoxy-D-ribulos-1-ylimino)methylamino]-1-(5-phospho-beta-D-ribosyl)imidazole-4-carboxamide. It functions in the pathway amino-acid biosynthesis; L-histidine biosynthesis; L-histidine from 5-phospho-alpha-D-ribose 1-diphosphate: step 4/9. This Azobacteroides pseudotrichonymphae genomovar. CFP2 protein is 1-(5-phosphoribosyl)-5-[(5-phosphoribosylamino)methylideneamino] imidazole-4-carboxamide isomerase.